Here is a 216-residue protein sequence, read N- to C-terminus: Phosphatidylserine decarboxylase proenzyme (216 aa).

The Schiff-base intermediate with substrate; via pyruvic acid role is filled by S183. The residue at position 183 (S183) is a Pyruvic acid (Ser); by autocatalysis.

Belongs to the phosphatidylserine decarboxylase family. PSD-A subfamily. Heterodimer of a large membrane-associated beta subunit and a small pyruvoyl-containing alpha subunit. Pyruvate serves as cofactor. Is synthesized initially as an inactive proenzyme. Formation of the active enzyme involves a self-maturation process in which the active site pyruvoyl group is generated from an internal serine residue via an autocatalytic post-translational modification. Two non-identical subunits are generated from the proenzyme in this reaction, and the pyruvate is formed at the N-terminus of the alpha chain, which is derived from the carboxyl end of the proenzyme. The post-translation cleavage follows an unusual pathway, termed non-hydrolytic serinolysis, in which the side chain hydroxyl group of the serine supplies its oxygen atom to form the C-terminus of the beta chain, while the remainder of the serine residue undergoes an oxidative deamination to produce ammonia and the pyruvoyl prosthetic group on the alpha chain.

Its subcellular location is the cell membrane. It carries out the reaction a 1,2-diacyl-sn-glycero-3-phospho-L-serine + H(+) = a 1,2-diacyl-sn-glycero-3-phosphoethanolamine + CO2. It participates in phospholipid metabolism; phosphatidylethanolamine biosynthesis; phosphatidylethanolamine from CDP-diacylglycerol: step 2/2. Its function is as follows. Catalyzes the formation of phosphatidylethanolamine (PtdEtn) from phosphatidylserine (PtdSer). The polypeptide is Phosphatidylserine decarboxylase proenzyme (Cupriavidus taiwanensis (strain DSM 17343 / BCRC 17206 / CCUG 44338 / CIP 107171 / LMG 19424 / R1) (Ralstonia taiwanensis (strain LMG 19424))).